Consider the following 348-residue polypeptide: S-adenosylmethionine:tRNA ribosyltransferase-isomerase (348 aa).

It belongs to the QueA family. As to quaternary structure, monomer.

The protein resides in the cytoplasm. It carries out the reaction 7-aminomethyl-7-carbaguanosine(34) in tRNA + S-adenosyl-L-methionine = epoxyqueuosine(34) in tRNA + adenine + L-methionine + 2 H(+). The protein operates within tRNA modification; tRNA-queuosine biosynthesis. Transfers and isomerizes the ribose moiety from AdoMet to the 7-aminomethyl group of 7-deazaguanine (preQ1-tRNA) to give epoxyqueuosine (oQ-tRNA). This chain is S-adenosylmethionine:tRNA ribosyltransferase-isomerase, found in Tolumonas auensis (strain DSM 9187 / NBRC 110442 / TA 4).